Consider the following 1274-residue polypeptide: RNA-directed RNA polymerase VP2 (1274 aa).

In terms of domain architecture, RdRp catalytic spans 561 to 798; the sequence is LSTTSGSVVT…KLYALMGCRI (238 aa).

It belongs to the reoviridae RNA-directed RNA polymerase family.

The protein resides in the virion. The enzyme catalyses RNA(n) + a ribonucleoside 5'-triphosphate = RNA(n+1) + diphosphate. Its function is as follows. RNA-directed RNA polymerase that is involved in transcription and genome replication. Following infection, it catalyzes the synthesis of fully conservative plus strands. After core assembly, which consists in recruitment of one capped plus-strand for each genomic segments and polymerase complexes, the polymerase switches mode and catalyzes the synthesis of complementary minus-strands. This is RNA-directed RNA polymerase VP2 (S2) from Aquareovirus C (isolate Golden shiner/USA/GSRV/1977) (AQRV-C).